The primary structure comprises 191 residues: MIRISDAAQAHFAKLLANQEEGTQIRVFVINPGTPNAECGVSYCPPDAVEDTDTALKFEQLTAYVDELSAPYLEDAEIDFVTDQLGSQLTLKAPNAKMRKVSDDAPLMERVEYLLQSQINPQLAGHGGRVSLMEITDDGLAILQFGGGCNGCSMVDVTLKEGIEKQLLNEFPELKGVRDLTEHQRGEHSYY.

Residues Cys149 and Cys152 each contribute to the [4Fe-4S] cluster site.

This sequence belongs to the NfuA family. As to quaternary structure, homodimer. It depends on [4Fe-4S] cluster as a cofactor.

Functionally, involved in iron-sulfur cluster biogenesis. Binds a 4Fe-4S cluster, can transfer this cluster to apoproteins, and thereby intervenes in the maturation of Fe/S proteins. Could also act as a scaffold/chaperone for damaged Fe/S proteins. In Klebsiella pneumoniae (strain 342), this protein is Fe/S biogenesis protein NfuA.